The chain runs to 539 residues: Protein peanut (539 aa).

2 positions are modified to phosphoserine: S6 and S13. Positions 29–90 (LRDKQQAASA…GASNGDSNKL (62 aa)) are disordered. Positions 35–54 (AASASASSATNGSSGSESLV) are enriched in low complexity. One can recognise a Septin-type G domain in the interval 139–411 (RGFEFTLMVV…ENYRCRKLSE (273 aa)). Residues 149–156 (GASGLGKS) are G1 motif. Residues 149 to 156 (GASGLGKS), T183, G209, 288 to 296 (KADTMTPDE), G345, and R360 each bind GTP. The tract at residues 206–209 (DTPG) is G3 motif. Residues 287-290 (AKAD) form a G4 motif region. Residues 420 to 516 (RLSNKNPLTQ…HVTLEELKRR (97 aa)) are a coiled coil. Positions 513 to 539 (LKRRSLGANSSTDNVDGKKEKKKKGLF) are disordered. The residue at position 517 (S517) is a Phosphoserine.

The protein belongs to the TRAFAC class TrmE-Era-EngA-EngB-Septin-like GTPase superfamily. Septin GTPase family. In terms of assembly, likely part of a multicomponent septin complex that includes Septin1. Interacts with Septin1. Interacts with hil. Interacts with park. Post-translationally, ubiquitinated by park, leading to its degradation by the proteasome. As to expression, accumulates at the leading edge of the cleavage furrow in dividing cells and cellularizing embryos (at protein level).

Its subcellular location is the apical cell membrane. It localises to the cleavage furrow. It is found in the cytoplasm. The protein resides in the cell cortex. Its function is as follows. Involved in cytokinesis and possibly cellularization. Also acts as an enhancer of the sina gene, thus having a role in photoreceptor development. May be involved in p53-dependent apoptosis. In Drosophila melanogaster (Fruit fly), this protein is Protein peanut (pnut).